The following is a 157-amino-acid chain: Large ribosomal subunit protein eL24 (157 aa).

The tract at residues 94–157 (RNQKPEVRKA…ISAPRVGGKR (64 aa)) is disordered. Positions 96–117 (QKPEVRKAQREQAIRAAKEAKK) are enriched in basic and acidic residues. The span at 123–140 (KKPAAPSAKASTKTAQKP) shows a compositional bias: low complexity.

The protein belongs to the eukaryotic ribosomal protein eL24 family. Component of the large ribosomal subunit.

Its subcellular location is the cytoplasm. Its function is as follows. Component of the large ribosomal subunit. The ribosome is a large ribonucleoprotein complex responsible for the synthesis of proteins in the cell. The sequence is that of Large ribosomal subunit protein eL24 (rpl24) from Pagrus major (Red sea bream).